The chain runs to 197 residues: Putative AgrB-like protein (197 aa).

4 consecutive transmembrane segments (helical) span residues 29-49 (FGFT…AVGL), 79-99 (SIGC…VPFA), 102-122 (YAWI…APYY), and 143-163 (ILIV…LVLG).

Belongs to the AgrB family.

Its subcellular location is the cell membrane. Its function is as follows. May be involved in the proteolytic processing of a quorum sensing system signal molecule precursor. In Halalkalibacterium halodurans (strain ATCC BAA-125 / DSM 18197 / FERM 7344 / JCM 9153 / C-125) (Bacillus halodurans), this protein is Putative AgrB-like protein.